Reading from the N-terminus, the 241-residue chain is 3-deoxy-D-manno-octulosonic acid kinase (241 aa).

Residue D171 is part of the active site.

This sequence belongs to the protein kinase superfamily. KdkA/RfaP family.

It is found in the cell inner membrane. The catalysed reaction is an alpha-Kdo-(2-&gt;6)-lipid IVA + ATP = a 4-O-phospho-alpha-Kdo-(2-&gt;6)-lipid IVA + ADP + H(+). It participates in bacterial outer membrane biogenesis; LPS core biosynthesis. Catalyzes the ATP-dependent phosphorylation of the 3-deoxy-D-manno-octulosonic acid (Kdo) residue in Kdo-lipid IV(A) at the 4-OH position. The polypeptide is 3-deoxy-D-manno-octulosonic acid kinase (Haemophilus influenzae (strain 86-028NP)).